The primary structure comprises 375 residues: MSDQQTCVIDNGSGVVKAGFAGEDAPRAVFPSIVGRPKNVSALIGVDSASEYLGDEAQQKRGVLKIFYPIEHGIVKDWDDMEKIWNHTFYVELRVQPDEHPILLTEAPLNPKTNREKMTQIMFETFNVPALYVAIQAVLSLYSAGRTTGIVCDAGDGVTHTVPIYEGFSIPHAVSRIQLAGRDLTTFLAKLLTERGYNFTSSAELEIVRDIKEKLCFVALDYESALKQSHDSSQFEKNYELPDGKVITIGSERFRCPEYLFKPLEMNGRELDSIQDLTYKSIQECDVDVRRDLYQNIILSGGTTMYEGIGERLLKEIENRAPKSINVKVIASPDRRFAVWRGGSTLTSLSTFASMWITKEDYDENGASIVHRKCI.

This sequence belongs to the actin family.

It is found in the cytoplasm. The protein resides in the cytoskeleton. It carries out the reaction ATP + H2O = ADP + phosphate + H(+). In terms of biological role, actins are highly conserved proteins that are involved in various types of cell motility and are ubiquitously expressed in all eukaryotic cells. This is Actin, cytoplasmic from Oxytricha trifallax (Sterkiella histriomuscorum).